The primary structure comprises 308 residues: 4-hydroxyproline 2-epimerase (308 aa).

Residue Cys88 is the Proton acceptor of the active site. Residues 89 to 90 (GH), His208, and Asp232 contribute to the substrate site. Catalysis depends on Cys236, which acts as the Proton donor. Position 237–238 (237–238 (GT)) interacts with substrate.

The protein belongs to the proline racemase family.

The catalysed reaction is trans-4-hydroxy-L-proline = cis-4-hydroxy-D-proline. Its function is as follows. Catalyzes the reversible epimerization of cis-4-hydroxy-D-proline (c4DHyp) to trans-4-hydroxy-L-proline (t4LHyp). May be involved in a degradation pathway that allows P.putida strain KT2440 to grow on either epimer of 4-hydroxyproline, c4DHyp and t4LHyp, as the sole carbon and nitrogen source. Does not exhibit measureable racemase activity in vitro with any of the 19 natural chiral amino acid enantiomers. The chain is 4-hydroxyproline 2-epimerase from Pseudomonas putida (strain ATCC 47054 / DSM 6125 / CFBP 8728 / NCIMB 11950 / KT2440).